The chain runs to 333 residues: Phosphate acetyltransferase (333 aa).

The protein belongs to the phosphate acetyltransferase and butyryltransferase family.

It localises to the cytoplasm. The enzyme catalyses acetyl-CoA + phosphate = acetyl phosphate + CoA. Its pathway is metabolic intermediate biosynthesis; acetyl-CoA biosynthesis; acetyl-CoA from acetate: step 2/2. The protein is Phosphate acetyltransferase (pta) of Clostridium acetobutylicum (strain ATCC 824 / DSM 792 / JCM 1419 / IAM 19013 / LMG 5710 / NBRC 13948 / NRRL B-527 / VKM B-1787 / 2291 / W).